Reading from the N-terminus, the 253-residue chain is Phosphate import ATP-binding protein PstB (253 aa).

Residues 5–248 (IETINLHVYY…PEHELTEKYV (244 aa)) form the ABC transporter domain. 37 to 44 (GPSGCGKS) serves as a coordination point for ATP.

It belongs to the ABC transporter superfamily. Phosphate importer (TC 3.A.1.7) family. The complex is composed of two ATP-binding proteins (PstB), two transmembrane proteins (PstC and PstA) and a solute-binding protein (PstS).

Its subcellular location is the cell membrane. It carries out the reaction phosphate(out) + ATP + H2O = ADP + 2 phosphate(in) + H(+). Part of the ABC transporter complex PstSACB involved in phosphate import. Responsible for energy coupling to the transport system. This chain is Phosphate import ATP-binding protein PstB, found in Pyrococcus furiosus (strain ATCC 43587 / DSM 3638 / JCM 8422 / Vc1).